The following is a 382-amino-acid chain: Intermediate transcription factor 3 large subunit (382 aa).

It belongs to the orthopoxvirus OPG150 family. As to quaternary structure, heterodimerizes with protein A8 to form the virus intermediate transcription factor (VITF)-3.

Acts with RNA polymerase to initiate transcription from intermediate gene promoters. The polypeptide is Intermediate transcription factor 3 large subunit (OPG150) (Bos taurus (Bovine)).